The primary structure comprises 445 residues: C-terminal-binding protein 2 (445 aa).

Arg-22 is modified (asymmetric dimethylarginine). NAD(+) contacts are provided by residues Ser-106, 186-191, Asp-210, 243-249, 270-272, and Asp-296; these read IGFGRT, CNLNEHN, and AAR. The active site involves Arg-272. Glu-301 is a catalytic residue. The active-site Proton donor is His-321. 321-324 contributes to the NAD(+) binding site; it reads HTAW. Residues 414–445 are disordered; it reads THNLPTVAHPSQAPSPNQPTKHGDNREHPNEQ. Position 428 is a phosphoserine (Ser-428). Basic and acidic residues predominate over residues 434 to 445; that stretch reads KHGDNREHPNEQ.

Belongs to the D-isomer specific 2-hydroxyacid dehydrogenase family. In terms of assembly, interacts with the C-terminus of adenovirus E1A protein. Can form homodimers or heterodimers of CTBP1 and CTBP2. Interacts with HIPK2. Interacts with ZNF217, PNN, NRIP1 and WIZ. Interacts with PRDM16; represses white adipose tissue (WAT)-specific genes expression. Interacts with MCRIP1. As to expression, isoform 2 is specifically localized in synaptic ribbon (at protein level).

It localises to the nucleus. Its subcellular location is the synapse. Its function is as follows. Corepressor targeting diverse transcription regulators. Functions in brown adipose tissue (BAT) differentiation. Isoform 2 probably acts as a scaffold for specialized synapses. The polypeptide is C-terminal-binding protein 2 (CTBP2) (Bos taurus (Bovine)).